A 169-amino-acid chain; its full sequence is S-ribosylhomocysteine lyase (169 aa).

Residues His-54, His-58, and Cys-128 each coordinate Fe cation.

The protein belongs to the LuxS family. As to quaternary structure, homodimer. The cofactor is Fe cation.

The enzyme catalyses S-(5-deoxy-D-ribos-5-yl)-L-homocysteine = (S)-4,5-dihydroxypentane-2,3-dione + L-homocysteine. Its function is as follows. Involved in the synthesis of autoinducer 2 (AI-2) which is secreted by bacteria and is used to communicate both the cell density and the metabolic potential of the environment. The regulation of gene expression in response to changes in cell density is called quorum sensing. Catalyzes the transformation of S-ribosylhomocysteine (RHC) to homocysteine (HC) and 4,5-dihydroxy-2,3-pentadione (DPD). This Shewanella sp. (strain ANA-3) protein is S-ribosylhomocysteine lyase.